A 469-amino-acid polypeptide reads, in one-letter code: Sorting and assembly machinery component 50 homolog (469 aa).

The POTRA domain maps to 45 to 125 (VVVQHVHFDG…LDVTFEVTEL (81 aa)). Lys255 carries the post-translational modification N6-methyllysine.

It belongs to the SAM50/omp85 family. In terms of assembly, associates with the mitochondrial contact site and cristae organizing system (MICOS) complex, composed of at least MICOS10/MIC10, CHCHD3/MIC19, CHCHD6/MIC25, APOOL/MIC27, IMMT/MIC60, APOO/MIC23/MIC26 and QIL1/MIC13. This complex was also known under the names MINOS or MitOS complex. The MICOS complex associates with mitochondrial outer membrane proteins SAMM50, MTX1 and MTX2 (together described as components of the mitochondrial outer membrane sorting assembly machinery (SAM) complex) and DNAJC11, mitochondrial inner membrane protein TMEM11 and with HSPA9. The MICOS and SAM complexes together with DNAJC11 are part of a large protein complex spanning both membranes termed the mitochondrial intermembrane space bridging (MIB) complex. Interacts with IMMT/MIC60. Interacts with CHCHD3/MIC19. Interacts with ARMC1. (Microbial infection) Interacts with parasite T.gondii RH strain MAF1b1; the interaction is probably indirect and results in the disruption of the MIB complex and the formation of SPOTs (structures positive for outer mitochondrial membrane (OMM)), a cellular response to OMM stress, which leads to the constitutive shedding of OMM vesicles.

It localises to the mitochondrion outer membrane. The protein resides in the cytoplasm. It is found in the mitochondrion. Its function is as follows. Plays a crucial role in the maintenance of the structure of mitochondrial cristae and the proper assembly of the mitochondrial respiratory chain complexes. Required for the assembly of TOMM40 into the TOM complex. In Mus musculus (Mouse), this protein is Sorting and assembly machinery component 50 homolog (Samm50).